A 107-amino-acid polypeptide reads, in one-letter code: Putative septation protein SpoVG (107 aa).

A disordered region spans residues 82 to 107 (ETDEVIPDKNAQPSSDSEDNGSEEEA). Positions 97-107 (DSEDNGSEEEA) are enriched in acidic residues.

This sequence belongs to the SpoVG family.

In terms of biological role, could be involved in septation. The sequence is that of Putative septation protein SpoVG from Staphylococcus carnosus (strain TM300).